The sequence spans 400 residues: GTPase Obg (400 aa).

Residues 1-159 (MRFVDEAVIT…REIRLELKVL (159 aa)) enclose the Obg domain. The OBG-type G domain occupies 160-333 (ADVGLLGMPN…VVYYLMDQIE (174 aa)). GTP contacts are provided by residues 166–173 (GMPNAGKS), 191–195 (FTTMV), 213–216 (DIPG), 283–286 (NKLD), and 314–316 (SGL). The Mg(2+) site is built by Ser-173 and Thr-193.

This sequence belongs to the TRAFAC class OBG-HflX-like GTPase superfamily. OBG GTPase family. As to quaternary structure, monomer. Mg(2+) is required as a cofactor.

The protein localises to the cytoplasm. An essential GTPase which binds GTP, GDP and possibly (p)ppGpp with moderate affinity, with high nucleotide exchange rates and a fairly low GTP hydrolysis rate. Plays a role in control of the cell cycle, stress response, ribosome biogenesis and in those bacteria that undergo differentiation, in morphogenesis control. The sequence is that of GTPase Obg from Acinetobacter baylyi (strain ATCC 33305 / BD413 / ADP1).